Here is a 1852-residue protein sequence, read N- to C-terminus: Dihydropyridine-sensitive L-type skeletal muscle calcium channel subunit alpha-1 (1852 aa).

Residues Met1–Lys70 lie on the Cytoplasmic side of the membrane. An I repeat occupies Asn57–Phe354. Residues Pro71–Ala86 traverse the membrane as a helical segment. Residues Leu87–Ser107 lie on the Extracellular side of the membrane. 2 N-linked (GlcNAc...) asparagine glycosylation sites follow: Asn99 and Asn102. A helical membrane pass occupies residues Leu108–Tyr127. Topologically, residues Gly128 to Asn139 are cytoplasmic. The chain crosses the membrane as a helical span at residues Cys140–Thr155. The Extracellular segment spans residues Leu156–Asp176. The chain crosses the membrane as a helical span at residues Met177–Val195. Residues Pro196–His214 lie on the Cytoplasmic side of the membrane. Residues Ile215–Phe234 traverse the membrane as a helical segment. Residues Lys235–Trp326 are Extracellular-facing. Asn274 carries an N-linked (GlcNAc...) asparagine glycan. A helical transmembrane segment spans residues Pro327–Ser351. At Gly352–Lys447 the chain is on the cytoplasmic side. The interval Gln374–Glu391 is binding to the beta subunit. An II repeat occupies Asn433 to Leu679. The helical transmembrane segment at Phe448–Met466 threads the bilayer. The Extracellular portion of the chain corresponds to Glu467 to Thr481. Asn470 is a glycosylation site (N-linked (GlcNAc...) asparagine). A helical membrane pass occupies residues Ala482–Phe501. The Cytoplasmic portion of the chain corresponds to Gly502 to Ser509. The chain crosses the membrane as a helical span at residues Ile510–Leu528. Residues Val529–Gly538 lie on the Extracellular side of the membrane. Residues Ile539–Trp557 form a helical membrane-spanning segment. At Thr558–Ser576 the chain is on the cytoplasmic side. The chain crosses the membrane as a helical span at residues Leu577 to Phe596. Residues Gly597 to Leu651 lie on the Extracellular side of the membrane. Residues Val652–Ala675 form a helical membrane-spanning segment. Residues Val676–Thr815 are Cytoplasmic-facing. Residues His802–Phe1084 form an III repeat. A helical membrane pass occupies residues Thr816 to Ala834. The Extracellular segment spans residues Glu835–Tyr850. The helical transmembrane segment at Ala851 to Tyr870 threads the bilayer. Over Gly871–Asn882 the chain is Cytoplasmic. The helical transmembrane segment at Ser883 to Met901 threads the bilayer. The Extracellular segment spans residues Glu902–Val908. The helical transmembrane segment at Val909–Ala927 threads the bilayer. At Lys928–Asn946 the chain is on the cytoplasmic side. A helical membrane pass occupies residues Ile947 to Phe966. Residues Lys967–Gly1056 lie on the Extracellular side of the membrane. Residues Arg1004–Lys1093 form a dihydropyridine binding region. Residues Ile1057–Ile1081 form a helical membrane-spanning segment. Topologically, residues Val1082–Cys1134 are cytoplasmic. The IV repeat unit spans residues Asn1121 to Val1405. The chain crosses the membrane as a helical span at residues Tyr1135–Ile1153. Topologically, residues Gln1154–Thr1168 are extracellular. Residue Asn1157 is glycosylated (N-linked (GlcNAc...) asparagine). Residues Leu1169 to Phe1188 form a helical membrane-spanning segment. Residues Lys1189–Asp1196 lie on the Cytoplasmic side of the membrane. The chain crosses the membrane as a helical span at residues Pro1197 to Leu1215. Topologically, residues Ser1216–Ser1252 are extracellular. A helical membrane pass occupies residues Ile1253 to Ser1271. The Cytoplasmic segment spans residues Glu1272 to His1290. A helical membrane pass occupies residues Val1291 to Phe1310. The Extracellular segment spans residues Gly1311–Ile1377. Residues Leu1358 to Lys1424 form a dihydropyridine binding region. Positions Glu1370–Ser1413 are phenylalkylamine binding. A helical membrane pass occupies residues Ala1378–Met1402. At Asp1403–Val1852 the chain is on the cytoplasmic side. The EF-hand domain maps to His1418–Pro1453. Residues Asp1431, Glu1433, Thr1435, Arg1437, and Asp1442 each coordinate Ca(2+). Residues Asn1820–Val1852 form a disordered region.

The protein belongs to the calcium channel alpha-1 subunit (TC 1.A.1.11) family. Multisubunit complex consisting of alpha-1, alpha-2, beta and delta subunits in a 1:1:1:1 ratio. The channel activity is directed by the pore-forming and voltage-sensitive alpha-1 subunit. In many cases, this subunit is sufficient to generate voltage-sensitive calcium channel activity. The auxiliary subunits beta and alpha-2/delta linked by a disulfide bridge regulate the channel activity. An additional gamma subunit is present only in skeletal muscle L-type channel. Post-translationally, may be non-phosphorylated. In terms of tissue distribution, skeletal muscle.

It localises to the membrane. Its function is as follows. Voltage-sensitive calcium channels (VSCC) mediate the entry of calcium ions into excitable cells and are also involved in a variety of calcium-dependent processes, including muscle contraction, gene expression, cell motility, cell division and cell death. The isoform alpha-1S gives rise to L-type calcium currents. Long-lasting (L-type) calcium channels belong to the 'high-voltage activated' (HVA) group. They are blocked by dihydropyridines (DHP), phenylalkylamines, and by benzothiazepines. Calcium channels containing the alpha-1S subunit play an important role in excitation-contraction coupling in skeletal muscle. The protein is Dihydropyridine-sensitive L-type skeletal muscle calcium channel subunit alpha-1 of Cyprinus carpio (Common carp).